A 698-amino-acid chain; its full sequence is Elongation factor G 1 (698 aa).

Residues 8–290 enclose the tr-type G domain; the sequence is ERYRNIGIVA…AVVDYLPAPI (283 aa). Residues 17–24, 88–92, and 142–145 each bind GTP; these read AHVDAGKT, DTPGH, and NKMD.

This sequence belongs to the TRAFAC class translation factor GTPase superfamily. Classic translation factor GTPase family. EF-G/EF-2 subfamily.

The protein resides in the cytoplasm. In terms of biological role, catalyzes the GTP-dependent ribosomal translocation step during translation elongation. During this step, the ribosome changes from the pre-translocational (PRE) to the post-translocational (POST) state as the newly formed A-site-bound peptidyl-tRNA and P-site-bound deacylated tRNA move to the P and E sites, respectively. Catalyzes the coordinated movement of the two tRNA molecules, the mRNA and conformational changes in the ribosome. This chain is Elongation factor G 1, found in Shewanella denitrificans (strain OS217 / ATCC BAA-1090 / DSM 15013).